Here is a 198-residue protein sequence, read N- to C-terminus: CASP-like protein 2B1 (198 aa).

The Cytoplasmic portion of the chain corresponds to 1–12; that stretch reads MAAAMGLERKAK. The helical transmembrane segment at 13–33 threads the bilayer; it reads VAEVALRCAVCALAALAAALV. Residues 34-55 are Extracellular-facing; the sequence is GTGSQTRTFFSLEKKARFTDMK. Residues 56-76 traverse the membrane as a helical segment; the sequence is ALVLLVAAHGAAAVYSLLQLA. The Cytoplasmic segment spans residues 77-91; sequence RCAAAAAWKGGSNGG. A helical transmembrane segment spans residues 92 to 112; that stretch reads AAVVAWSVFSCDQAVAYALMA. Topologically, residues 113–149 are extracellular; it reads ATAAALQSSVVGKRGQPELQWMPVCGLYGAFCRRVGE. A helical membrane pass occupies residues 150–170; that stretch reads GLAAAVAAGLAAVLLAAVSAF. Residues 171 to 198 are Cytoplasmic-facing; that stretch reads NLFRLYGGGGGGRKSSAGAVSGNGANTW.

The protein belongs to the Casparian strip membrane proteins (CASP) family. As to quaternary structure, homodimer and heterodimers.

The protein localises to the cell membrane. In Oryza sativa subsp. japonica (Rice), this protein is CASP-like protein 2B1.